Consider the following 309-residue polypeptide: Metal ABC transporter substrate-binding lipoprotein SsaB (309 aa).

Residues 1-19 form the signal peptide; sequence MKKLGFLSLLLLAVCTLFA. Residue C20 is the site of N-palmitoyl cysteine attachment. The S-diacylglycerol cysteine moiety is linked to residue C20. A divalent metal cation is bound by residues H67, H139, E205, and D280.

The protein belongs to the bacterial solute-binding protein 9 family. Lipoprotein receptor antigen (Lrai) subfamily. Homodimer and homotrimer.

The protein localises to the cell membrane. Its function is as follows. Part of an ATP-binding cassette (ABC) transport system involved in metal import. Binds a metal with high affinity and specificity and delivers it to the membrane permease for translocation into the cytoplasm. Also acts as an adhesin which is involved on adherence to extracellular matrix. It is an important factor in the pathogenesis and infection. May contribute to the formation and accumulation of dental plaque. The protein is Metal ABC transporter substrate-binding lipoprotein SsaB (ssaB) of Streptococcus sanguinis.